A 228-amino-acid chain; its full sequence is ATP synthase subunit beta, mitochondrial (228 aa).

A mitochondrion-targeting transit peptide spans 1–31 (MFALRAAAKADKNLLPFLGQLSRSHAAKAAK). 183–190 (GGAGVGKT) lines the ATP pocket.

The protein belongs to the ATPase alpha/beta chains family. In terms of assembly, F-type ATPases have 2 components, CF(1) - the catalytic core - and CF(0) - the membrane proton channel. CF(1) has five subunits: alpha(3), beta(3), gamma(1), delta(1), epsilon(1). CF(0) has three main subunits: a, b and c.

It is found in the mitochondrion. Its subcellular location is the mitochondrion inner membrane. It carries out the reaction ATP + H2O + 4 H(+)(in) = ADP + phosphate + 5 H(+)(out). Its function is as follows. Mitochondrial membrane ATP synthase (F(1)F(0) ATP synthase or Complex V) produces ATP from ADP in the presence of a proton gradient across the membrane which is generated by electron transport complexes of the respiratory chain. F-type ATPases consist of two structural domains, F(1) - containing the extramembraneous catalytic core, and F(0) - containing the membrane proton channel, linked together by a central stalk and a peripheral stalk. During catalysis, ATP synthesis in the catalytic domain of F(1) is coupled via a rotary mechanism of the central stalk subunits to proton translocation. Subunits alpha and beta form the catalytic core in F(1). Rotation of the central stalk against the surrounding alpha(3)beta(3) subunits leads to hydrolysis of ATP in three separate catalytic sites on the beta subunits. The sequence is that of ATP synthase subunit beta, mitochondrial from Drosophila virilis (Fruit fly).